The sequence spans 1049 residues: Isoleucine--tRNA ligase (1049 aa).

The short motif at 48 to 58 is the 'HIGH' region element; that stretch reads PYTTGRIHLGT. Positions 596–600 match the 'KMSKS' region motif; the sequence is KMSKS. Residue Lys599 coordinates ATP.

The protein belongs to the class-I aminoacyl-tRNA synthetase family. IleS type 2 subfamily. Monomer. Zn(2+) serves as cofactor.

The protein resides in the cytoplasm. It carries out the reaction tRNA(Ile) + L-isoleucine + ATP = L-isoleucyl-tRNA(Ile) + AMP + diphosphate. Catalyzes the attachment of isoleucine to tRNA(Ile). As IleRS can inadvertently accommodate and process structurally similar amino acids such as valine, to avoid such errors it has two additional distinct tRNA(Ile)-dependent editing activities. One activity is designated as 'pretransfer' editing and involves the hydrolysis of activated Val-AMP. The other activity is designated 'posttransfer' editing and involves deacylation of mischarged Val-tRNA(Ile). The sequence is that of Isoleucine--tRNA ligase from Methanothrix thermoacetophila (strain DSM 6194 / JCM 14653 / NBRC 101360 / PT) (Methanosaeta thermophila).